Here is a 364-residue protein sequence, read N- to C-terminus: Probable dual-specificity RNA methyltransferase RlmN (364 aa).

Glu-107 acts as the Proton acceptor in catalysis. The Radical SAM core domain occupies 113–346 (HDYGNSVCVT…ATIRREQGSD (234 aa)). Cys-120 and Cys-351 form a disulfide bridge. [4Fe-4S] cluster contacts are provided by Cys-127, Cys-131, and Cys-134. Residues 177–178 (GE), Ser-209, 232–234 (SLH), and Asn-308 each bind S-adenosyl-L-methionine. Cys-351 (S-methylcysteine intermediate) is an active-site residue.

Belongs to the radical SAM superfamily. RlmN family. [4Fe-4S] cluster serves as cofactor.

The protein resides in the cytoplasm. It carries out the reaction adenosine(2503) in 23S rRNA + 2 reduced [2Fe-2S]-[ferredoxin] + 2 S-adenosyl-L-methionine = 2-methyladenosine(2503) in 23S rRNA + 5'-deoxyadenosine + L-methionine + 2 oxidized [2Fe-2S]-[ferredoxin] + S-adenosyl-L-homocysteine. The enzyme catalyses adenosine(37) in tRNA + 2 reduced [2Fe-2S]-[ferredoxin] + 2 S-adenosyl-L-methionine = 2-methyladenosine(37) in tRNA + 5'-deoxyadenosine + L-methionine + 2 oxidized [2Fe-2S]-[ferredoxin] + S-adenosyl-L-homocysteine. Its function is as follows. Specifically methylates position 2 of adenine 2503 in 23S rRNA and position 2 of adenine 37 in tRNAs. Confers resistance to some classes of antibiotics. The polypeptide is Probable dual-specificity RNA methyltransferase RlmN (Staphylococcus haemolyticus (strain JCSC1435)).